The primary structure comprises 114 residues: rRNA-processing protein cgrA (114 aa).

Positions methionine 1–asparagine 11 are enriched in polar residues. The tract at residues methionine 1–serine 114 is disordered. Residues tyrosine 39 to lysine 93 show a composition bias toward basic and acidic residues. Positions glutamate 40 to arginine 101 form a coiled coil. The segment covering methionine 94–serine 114 has biased composition (basic residues).

Belongs to the CGR1 family.

The protein localises to the nucleus. Its subcellular location is the nucleolus. In terms of biological role, involved in nucleolar integrity and required for processing of the pre-rRNA for the 60S ribosome subunit. The protein is rRNA-processing protein cgrA (cgrA) of Aspergillus fumigatus (strain ATCC MYA-4609 / CBS 101355 / FGSC A1100 / Af293) (Neosartorya fumigata).